A 225-amino-acid chain; its full sequence is THAP domain-containing protein 1 B (225 aa).

Residues 5–57 form a THAP-type zinc finger; that stretch reads CSAYGCKNRYDKDRPISFHKFPLKRPLLCKKWEAAVRRADFKPTKYSSICSDH. A coiled-coil region spans residues 139-194; the sequence is VEDTVHQRRRIQQLEEQVDKLRKKLKIANQKCRRQERSLEKLEKEVSEYREAKGSG.

This sequence belongs to the THAP1 family.

The protein resides in the nucleus. Its subcellular location is the nucleoplasm. DNA-binding transcription regulator that regulates endothelial cell proliferation and G1/S cell-cycle progression. Specifically binds the 5'-[AT]NTNN[GT]GGCA[AGT]-3' core DNA sequence and acts by modulating expression of pRB-E2F cell-cycle target genes. This Xenopus laevis (African clawed frog) protein is THAP domain-containing protein 1 B (thap1-b).